The sequence spans 296 residues: Phosphoribosylaminoimidazole-succinocarboxamide synthase (296 aa).

The protein belongs to the SAICAR synthetase family.

It carries out the reaction 5-amino-1-(5-phospho-D-ribosyl)imidazole-4-carboxylate + L-aspartate + ATP = (2S)-2-[5-amino-1-(5-phospho-beta-D-ribosyl)imidazole-4-carboxamido]succinate + ADP + phosphate + 2 H(+). The protein operates within purine metabolism; IMP biosynthesis via de novo pathway; 5-amino-1-(5-phospho-D-ribosyl)imidazole-4-carboxamide from 5-amino-1-(5-phospho-D-ribosyl)imidazole-4-carboxylate: step 1/2. This chain is Phosphoribosylaminoimidazole-succinocarboxamide synthase, found in Geobacter sp. (strain M21).